The sequence spans 635 residues: Extracellular metalloproteinase 1 (635 aa).

Residues 1–19 (MHGLLLAAGLLSLPLHVLA) form the signal peptide. Residues 20 to 246 (HPQPSTSTSL…VHNVVDYVAH (227 aa)) constitute a propeptide that is removed on maturation. The N-linked (GlcNAc...) asparagine glycan is linked to asparagine 287. Zn(2+) is bound at residue histidine 430. The active site involves glutamate 431. Histidine 434 lines the Zn(2+) pocket. Asparagine 475, asparagine 594, and asparagine 623 each carry an N-linked (GlcNAc...) asparagine glycan.

The protein belongs to the peptidase M36 family. The cofactor is Zn(2+).

The protein localises to the secreted. Secreted metalloproteinase probably acting as a virulence factor. The protein is Extracellular metalloproteinase 1 (MEP1) of Trichophyton tonsurans (Scalp ringworm fungus).